The sequence spans 335 residues: Gibberellin 2-beta-dioxygenase 3 (335 aa).

In terms of domain architecture, Fe2OG dioxygenase spans 175–278 (ESDSCLRMNH…RISMIYFAGP (104 aa)). Fe cation contacts are provided by H202, D204, and H259. Residue R269 is part of the active site.

It belongs to the iron/ascorbate-dependent oxidoreductase family. GA2OX subfamily. Fe(2+) serves as cofactor. In terms of tissue distribution, not expressed in the apex.

It carries out the reaction gibberellin A1 + 2-oxoglutarate + O2 = gibberellin A8 + succinate + CO2. It functions in the pathway plant hormone biosynthesis; gibberellin biosynthesis. Functionally, catalyzes the 2-beta-hydroxylation of several biologically active gibberellins, leading to the homeostatic regulation of their endogenous level. Catabolism of gibberellins (GAs) plays a central role in plant development. Converts GA9/GA20 to GA51/GA29 and GA4/GA1 to GA34/GA8. In Arabidopsis thaliana (Mouse-ear cress), this protein is Gibberellin 2-beta-dioxygenase 3 (GA2OX3).